The sequence spans 1733 residues: Collagen alpha-1(XXIV) chain (1733 aa).

An N-terminal signal peptide occupies residues 1–35 (MHLGAYRTRHGKVSPTTETKLFLRFIVLCVVWISV). The region spanning 102–229 (ISLRQPLTVL…TVCQLEIMPS (128 aa)) is the Laminin G-like domain. The N-linked (GlcNAc...) asparagine glycan is linked to N157. Residues 257 to 335 (PHTAGMPTRH…SQEHQTPRAQ (79 aa)) form a disordered region. Residues 312-324 (IPNNRSNGSATVH) are compositionally biased toward polar residues. 3 N-linked (GlcNAc...) asparagine glycosylation sites follow: N366, N396, and N448. A disordered region spans residues 505–1499 (YLRGPKGDPG…GPPGAPGPRR (995 aa)). Collagen-like domains are found at residues 506–561 (LRGP…PGLS), 577–636 (GLVG…KGVR), 679–738 (GPAG…KGEQ), 742–801 (GEPG…PGQN), 802–861 (GPEG…KGEV), 886–945 (GSIG…KGQR), 946–1005 (GPRG…SGDV), 1006–1065 (GPAG…PGPR), 1072–1131 (GEEG…PGQR), 1135–1189 (GKKG…GIPG), 1191–1215 (RGHQ…PGED), 1220–1279 (GPPG…KGER), 1316–1375 (GVDG…KGEQ), 1376–1435 (GLPG…AGIV), and 1439–1498 (GPKG…PGPR). The span at 512–524 (DPGPPGPPGPMGI) shows a compositional bias: pro residues. Composition is skewed to low complexity over residues 573-599 (PGLL…LPGL) and 699-708 (PGVTGSVGPA). Positions 776-789 (DPGPQGPSGPPGPE) are enriched in pro residues. Over residues 912–921 (PGPPGAPGPM) the composition is skewed to pro residues. A compositionally biased stretch (low complexity) spans 923–944 (PLGLPGLVGARGAPGSPGPKGQ). Over residues 1045-1054 (GAKGDGGPAG) the composition is skewed to gly residues. Positions 1056–1074 (AGATGEPGPRGEPGAPGEE) are enriched in low complexity. Positions 1084–1093 (GAPGGSGLPG) are enriched in gly residues. A compositionally biased stretch (low complexity) spans 1175-1205 (PLGLMGPEGEPGIPGYRGHQGQPGPSGLPGP). A compositionally biased stretch (basic and acidic residues) spans 1237 to 1246 (TGEHGEEGYK). The segment covering 1323 to 1339 (YPGKPGLPGKQGLLGVP) has biased composition (low complexity). The span at 1352-1361 (GPQGGKGASG) shows a compositional bias: gly residues. Low complexity-rich tracts occupy residues 1371–1386 (PKGE…VPGQ) and 1434–1444 (IVGIVGPKGPI). The segment covering 1485–1495 (QPGPPGPPGAP) has biased composition (pro residues). Residues 1534 to 1733 (SDIFKTLTYL…YIESNSVCFL (200 aa)) enclose the Fibrillar collagen NC1 domain.

It belongs to the fibrillar collagen family. In terms of tissue distribution, expressed in skeleton. Found at ossification centers of the craniofacial, axial and appendicular skeleton. Also expressed in retina and to a lower extent in cornea, skin and tendon.

The protein localises to the secreted. Its subcellular location is the extracellular space. It localises to the extracellular matrix. Its function is as follows. Involved in osteoblast differentiation. This is Collagen alpha-1(XXIV) chain (Col24a1) from Mus musculus (Mouse).